The sequence spans 356 residues: NADH-quinone oxidoreductase subunit H (356 aa).

A run of 8 helical transmembrane segments spans residues 18–38, 87–107, 120–140, 166–186, 205–225, 265–285, 292–312, and 333–353; these read IVMIAQSVLLLVVLLVAIAYI, GVFLLAPLVSCVLALAAWAVI, VGILFIFAISSLSIYGIIMAG, IGFVIITVLLCAGTLNLSAVV, ILNWYVWPLFPMFVVFYVSAL, AITTMCALATILFLGGWLPPI, WVPGVIWFALKLFFMFFLIAM, and FLPLSLVMVVIVAGVLHFAGI.

It belongs to the complex I subunit 1 family. NDH-1 is composed of 14 different subunits. Subunits NuoA, H, J, K, L, M, N constitute the membrane sector of the complex.

The protein localises to the cell inner membrane. The enzyme catalyses a quinone + NADH + 5 H(+)(in) = a quinol + NAD(+) + 4 H(+)(out). Its function is as follows. NDH-1 shuttles electrons from NADH, via FMN and iron-sulfur (Fe-S) centers, to quinones in the respiratory chain. The immediate electron acceptor for the enzyme in this species is believed to be ubiquinone. Couples the redox reaction to proton translocation (for every two electrons transferred, four hydrogen ions are translocated across the cytoplasmic membrane), and thus conserves the redox energy in a proton gradient. This subunit may bind ubiquinone. The sequence is that of NADH-quinone oxidoreductase subunit H from Bradyrhizobium sp. (strain BTAi1 / ATCC BAA-1182).